We begin with the raw amino-acid sequence, 289 residues long: ATP synthase gamma chain (289 aa).

The protein belongs to the ATPase gamma chain family. As to quaternary structure, F-type ATPases have 2 components, CF(1) - the catalytic core - and CF(0) - the membrane proton channel. CF(1) has five subunits: alpha(3), beta(3), gamma(1), delta(1), epsilon(1). CF(0) has three main subunits: a, b and c.

The protein resides in the cell inner membrane. In terms of biological role, produces ATP from ADP in the presence of a proton gradient across the membrane. The gamma chain is believed to be important in regulating ATPase activity and the flow of protons through the CF(0) complex. The chain is ATP synthase gamma chain from Coxiella burnetii (strain CbuK_Q154) (Coxiella burnetii (strain Q154)).